We begin with the raw amino-acid sequence, 413 residues long: Divalent metal cation transporter MntH (413 aa).

Over Met1–Leu19 the chain is Cytoplasmic. The helical transmembrane segment at Ala20–Ala39 threads the bilayer. The Periplasmic portion of the chain corresponds to Thr40 to Gln51. A helical membrane pass occupies residues Leu52–Ala71. At Lys72 to Trp95 the chain is on the cytoplasmic side. The chain crosses the membrane as a helical span at residues Phe96–Ile118. Residues Gly119–Gly125 are Periplasmic-facing. A helical membrane pass occupies residues Val126–Leu145. Over Gln146–Lys155 the chain is Cytoplasmic. Residues Val156–Ser175 form a helical membrane-spanning segment. At Gln176 to Ala196 the chain is on the periplasmic side. The helical transmembrane segment at Val197–Thr220 threads the bilayer. Residues Gln221–Asp238 lie on the Cytoplasmic side of the membrane. Residues Val239 to Ala258 form a helical membrane-spanning segment. Topologically, residues Ala259–Tyr276 are periplasmic. The helical transmembrane segment at Leu277 to Ala297 threads the bilayer. The Cytoplasmic segment spans residues Ala298–Arg327. A helical membrane pass occupies residues Arg328 to Asp344. The Periplasmic portion of the chain corresponds to Pro345–Val350. The helical transmembrane segment at Met351 to Phe370 threads the bilayer. Residues Thr371–Lys387 lie on the Cytoplasmic side of the membrane. The chain crosses the membrane as a helical span at residues Gln388–Val406. The Periplasmic segment spans residues Gly407 to Ser413.

Belongs to the NRAMP family.

The protein localises to the cell inner membrane. Functionally, h(+)-stimulated, divalent metal cation uptake system. The sequence is that of Divalent metal cation transporter MntH from Salmonella gallinarum (strain 287/91 / NCTC 13346).